Consider the following 284-residue polypeptide: uncharacterized protein (284 aa).

The interval 236-284 (IDITNEADSSEIIDSEPSNKDETEKPSAQETDPFDGKPVDIKDDELPFD) is disordered. Composition is skewed to basic and acidic residues over residues 252-262 (PSNKDETEKPS) and 269-284 (FDGK…LPFD).

This is an uncharacterized protein from Bacillus subtilis (strain 168).